The sequence spans 168 residues: MAEVRDRNLPHQVQVHPQYRLDNTTGGGYGAKNYHSGPSTSQVLAVLTLLPIGGTLLALAGLTLAGTVIGLMLATPLFIIFSPVLVPAAIAIAMAVTGFLSSGAFGLTGLSSLSYVLNRLRYATGTEQLDLDHAKRRVQDMTEYVGQKTKEVGQKIENKAHEGQVGRT.

Residue alanine 2 is modified to N-acetylalanine. Residues 2–45 are polar; sequence AEVRDRNLPHQVQVHPQYRLDNTTGGGYGAKNYHSGPSTSQVLA. 3 helical membrane passes run 43-63, 76-96, and 97-117; these read VLAV…AGLT, PLFI…AMAV, and TGFL…SYVL. A hydrophobic region spans residues 46-117; sequence VLTLLPIGGT…TGLSSLSYVL (72 aa).

This sequence belongs to the oleosin family.

It localises to the lipid droplet. The protein localises to the membrane. In terms of biological role, may have a structural role to stabilize the lipid body during desiccation of the seed by preventing coalescence of the oil. Probably interacts with both lipid and phospholipid moieties of lipid bodies. May also provide recognition signals for specific lipase anchorage in lipolysis during seedling growth. The polypeptide is Oleosin 18.2 kDa (MATP6-A) (Gossypium hirsutum (Upland cotton)).